The primary structure comprises 913 residues: Glutamate receptor ionotropic, kainate 2 (913 aa).

At 1–566 the chain is on the extracellular side; that stretch reads MCAGTMKIIS…VFSFLNPLSP (566 aa). N72, N78, N280, N383, N417, N428, and N435 each carry an N-linked (GlcNAc...) asparagine glycan. A disulfide bridge connects residues C101 and C352. L-glutamate contacts are provided by P521, A523, and R528. N551 carries an N-linked (GlcNAc...) asparagine glycan. Residues 567-587 form a helical membrane-spanning segment; sequence DIWMYILLAYLGVSCVLFVIA. The Cytoplasmic segment spans residues 588-643; sequence RFSPYEWYNPHPCNPDSDVVENNFTLLNSFWFGVGALMQQGSELMPKALSTRIVGG. A helical transmembrane segment spans residues 644–664; sequence IWWFFTLIIISSYTANLAAFL. At 665–824 the chain is on the extracellular side; it reads TVERMESPID…KEASALGVQN (160 aa). Residues A694, T695, and E743 each contribute to the L-glutamate site. A disulfide bond links C755 and C809. N756 carries N-linked (GlcNAc...) asparagine glycosylation. A helical transmembrane segment spans residues 825–845; the sequence is IGGIFIVLAAGLVLSVFVAVG. Residues 846–913 are Cytoplasmic-facing; sequence EFLYKSKKNA…RRLPGKETMA (68 aa).

This sequence belongs to the glutamate-gated ion channel (TC 1.A.10.1) family. GRIK2 subfamily. Homotetramer and heterotetramer with GRIK5. Tetramers may be formed by the dimerization of dimers.

It is found in the cell membrane. Its subcellular location is the postsynaptic cell membrane. The catalysed reaction is Ca(2+)(in) = Ca(2+)(out). It catalyses the reaction Na(+)(in) = Na(+)(out). With respect to regulation, cold receptor activity activated by temperatures between 10-19 degrees Celsius. Functionally, ionotropic glutamate receptor that functions as a cation-permeable ligand-gated ion channel, gated by L-glutamate and the glutamatergic agonist kainic acid. L-glutamate acts as an excitatory neurotransmitter at many synapses in the central nervous system. Binding of the excitatory neurotransmitter L-glutamate induces a conformation change, leading to the opening of the cation channel, and thereby converts the chemical signal to an electrical impulse. The receptor then desensitizes rapidly and enters a transient inactive state, characterized by the presence of bound agonist. Independent of its ionotropic glutamate receptor activity, acts as a thermoreceptor conferring sensitivity to cold temperatures. Functions in dorsal root ganglion neurons. This chain is Glutamate receptor ionotropic, kainate 2 (grik2), found in Xenopus laevis (African clawed frog).